The following is a 30-amino-acid chain: DCLPDWFHYEGHCYRVFDEPKKWADAEKFC.

The 30-residue stretch at Asp1–Cys30 folds into the C-type lectin domain. Cysteines 2 and 13 form a disulfide.

This sequence belongs to the snaclec family. Heterodimer of a metalloproteinase subunit and a regulatory subunit comprising two polypeptides disulfide-linked (14 kDa and 17 kDa chains). As to expression, expressed by the venom gland.

Its subcellular location is the secreted. Functionally, calcium-dependent prothrombin activator. This protein may activate prothrombin via recognition by the regulatory subunit of the calcium ion bound conformation of its gamma-carboxyglutamic acid (GLA) domain, and the subsequent conversion of prothrombin to active thrombin is catalyzed by the catalytic subunit. The protein is Snaclec carinactivase-1 regulatory subunit 14 kDa chain of Echis carinatus (Saw-scaled viper).